We begin with the raw amino-acid sequence, 322 residues long: Secreted effector protein SseI (322 aa).

In terms of assembly, interacts with host IQGAP1 and host TRIP6 (thyroid receptor-interacting protein 6).

It is found in the secreted. The protein resides in the host cytoplasm. In terms of biological role, effector proteins function to alter host cell physiology and promote bacterial survival in host tissues. This protein is required to maintain a long-term chronic systemic infection in mice. It inhibits normal cell migration of primary macrophages and dendritic cells, by a mechanism that involves interaction with the host factor IQGAP1, an important regulator of the cytoskeleton and cell migration. Also accelerates the systemic spread of infection from the gastrointestinal tract to the bloodstream, probably by interacting with host TRIP6. In Salmonella typhimurium (strain LT2 / SGSC1412 / ATCC 700720), this protein is Secreted effector protein SseI (sseI).